Consider the following 729-residue polypeptide: Rho GTPase-activating protein 28 (729 aa).

Disordered stretches follow at residues 20-42 (AQPPNAESRCAPRAAASHPLSRK) and 55-105 (SNES…AEVT). Positions 65-75 (SRSNSEASVDS) are enriched in polar residues. S72 is modified (phosphoserine). The segment covering 80–89 (DFWREIESIK) has biased composition (basic and acidic residues). Phosphothreonine is present on T159. Residues 176–236 (GVSESPPRDT…SQDKEGSFAV (61 aa)) are disordered. Basic and acidic residues predominate over residues 195–204 (GTKEERELPR). Residues 217–226 (SLNSTTLSDA) are compositionally biased toward polar residues. In terms of domain architecture, Rho-GAP spans 380 to 577 (VPLTVLLDGD…LMLKYQKILW (198 aa)). Residues 612–631 (TLERETASPKTSKVLQKSPS) form a disordered region. The segment covering 619-630 (SPKTSKVLQKSP) has biased composition (polar residues).

In terms of tissue distribution, expressed in testis. Expressed at moderate level in kidney and ovary, and weakly expressed in spleen and skeletal muscle.

Functionally, GTPase activator for the Rho-type GTPases by converting them to an inactive GDP-bound state. The protein is Rho GTPase-activating protein 28 (ARHGAP28) of Homo sapiens (Human).